A 435-amino-acid chain; its full sequence is Adenylosuccinate synthetase (435 aa).

GTP is bound by residues 11–17 and 39–41; these read GDEGKGK and GHT. D12 acts as the Proton acceptor in catalysis. D12 and G39 together coordinate Mg(2+). IMP-binding positions include 12-15, 37-40, T134, R148, N230, T245, and R309; these read DEGK and NAGH. H40 (proton donor) is an active-site residue. Substrate is bound at residue 305 to 311; that stretch reads VTTGRKR. GTP is bound by residues R311, 337–339, and 419–421; these read KLD and GTG.

Belongs to the adenylosuccinate synthetase family. Homodimer. Requires Mg(2+) as cofactor.

It is found in the cytoplasm. The enzyme catalyses IMP + L-aspartate + GTP = N(6)-(1,2-dicarboxyethyl)-AMP + GDP + phosphate + 2 H(+). Its pathway is purine metabolism; AMP biosynthesis via de novo pathway; AMP from IMP: step 1/2. Functionally, plays an important role in the de novo pathway and in the salvage pathway of purine nucleotide biosynthesis. Catalyzes the first committed step in the biosynthesis of AMP from IMP. The polypeptide is Adenylosuccinate synthetase (Zygosaccharomyces rouxii (strain ATCC 2623 / CBS 732 / NBRC 1130 / NCYC 568 / NRRL Y-229)).